The chain runs to 94 residues: Small ribosomal subunit protein bS18 (94 aa).

This sequence belongs to the bacterial ribosomal protein bS18 family. Part of the 30S ribosomal subunit. Forms a tight heterodimer with protein bS6.

Binds as a heterodimer with protein bS6 to the central domain of the 16S rRNA, where it helps stabilize the platform of the 30S subunit. This Leptospira biflexa serovar Patoc (strain Patoc 1 / Ames) protein is Small ribosomal subunit protein bS18.